The chain runs to 146 residues: Transcriptional regulator MraZ (146 aa).

2 SpoVT-AbrB domains span residues 9-55 and 81-124; these read ASAL…PRPA and AMDV…DVQR.

The protein belongs to the MraZ family. Forms oligomers.

It is found in the cytoplasm. The protein resides in the nucleoid. The protein is Transcriptional regulator MraZ of Methylibium petroleiphilum (strain ATCC BAA-1232 / LMG 22953 / PM1).